The following is a 1013-amino-acid chain: RNA-binding protein 44 (1013 aa).

Disordered stretches follow at residues 1–25 and 56–94; these read MQAT…FQND and LATE…IFSQ. Over residues 56 to 76 the composition is skewed to basic and acidic residues; sequence LATEERASDKENSIVDQRDLS. The span at 78–94 shows a compositional bias: polar residues; the sequence is LSFSENQDSNRGNIFSQ. S365, S368, S510, S681, and S688 each carry phosphoserine. In terms of domain architecture, RRM spans 792-865; the sequence is FLIHVGGLCP…KSVTVRLVKI (74 aa). The interval 905–925 is disordered; that stretch reads RAKSRQLESEQDSEFPPLDQG.

As to quaternary structure, homodimer. Interacts with TEX14. Highly expressed in testis. Also expressed in other tissues at lower level.

Its subcellular location is the cytoplasm. Functionally, component of intercellular bridges during meiosis. Intercellular bridges are evolutionarily conserved structures that connect differentiating germ cells. Not required for fertility. This chain is RNA-binding protein 44 (Rbm44), found in Mus musculus (Mouse).